The chain runs to 582 residues: Transcription factor tau subunit sfc6 (582 aa).

Residues 1–97 (MGPKSKEYEN…SAKKQSSKGL (97 aa)) form a disordered region. The segment covering 18–39 (EDNDDDGDFVLENVMSEEDIEI) has biased composition (acidic residues). Over residues 63–87 (QPLTPSSSKGAGNEPKSQNSSTTRG) the composition is skewed to polar residues. 3 WD repeats span residues 221–262 (TQFL…NFKS), 268–314 (HDWG…VKFH), and 326–369 (FNDS…ECPL).

In terms of assembly, component of the TFIIIC complex including sfc1, sfc3, sfc4, sfc6 and sfc7. The subunits are organized in two globular domains, tauA and tauB, connected by a proteolysis-sensitive and flexible linker. Interacts with sfc1, sfc3 and sfc4.

It is found in the nucleus. Its function is as follows. TFIIIC mediates tRNA and 5S RNA gene activation by binding to intragenic promoter elements. Upstream of the transcription start site, TFIIIC assembles the initiation complex TFIIIB-TFIIIC-tDNA, which is sufficient for RNA polymerase III recruitment and function. Part of the tauB domain of TFIIIC that binds boxB DNA promoter sites of tRNA and similar genes. Cooperates with sfc3 in DNA binding. Localizes to chromatin insulator sequence without recruiting RNA polymerase III and plays a role in nuclear organization. This is Transcription factor tau subunit sfc6 from Schizosaccharomyces pombe (strain 972 / ATCC 24843) (Fission yeast).